A 195-amino-acid polypeptide reads, in one-letter code: Imidazoleglycerol-phosphate dehydratase (195 aa).

This sequence belongs to the imidazoleglycerol-phosphate dehydratase family.

It localises to the cytoplasm. It catalyses the reaction D-erythro-1-(imidazol-4-yl)glycerol 3-phosphate = 3-(imidazol-4-yl)-2-oxopropyl phosphate + H2O. Its pathway is amino-acid biosynthesis; L-histidine biosynthesis; L-histidine from 5-phospho-alpha-D-ribose 1-diphosphate: step 6/9. The polypeptide is Imidazoleglycerol-phosphate dehydratase (Paraburkholderia xenovorans (strain LB400)).